Reading from the N-terminus, the 311-residue chain is Aspartate carbamoyltransferase catalytic subunit (311 aa).

Carbamoyl phosphate is bound by residues R55 and T56. K85 contacts L-aspartate. The carbamoyl phosphate site is built by R106, H135, and Q138. R168 and R230 together coordinate L-aspartate. The carbamoyl phosphate site is built by L268 and P269.

Belongs to the aspartate/ornithine carbamoyltransferase superfamily. ATCase family. In terms of assembly, heterododecamer (2C3:3R2) of six catalytic PyrB chains organized as two trimers (C3), and six regulatory PyrI chains organized as three dimers (R2).

The enzyme catalyses carbamoyl phosphate + L-aspartate = N-carbamoyl-L-aspartate + phosphate + H(+). Its pathway is pyrimidine metabolism; UMP biosynthesis via de novo pathway; (S)-dihydroorotate from bicarbonate: step 2/3. In terms of biological role, catalyzes the condensation of carbamoyl phosphate and aspartate to form carbamoyl aspartate and inorganic phosphate, the committed step in the de novo pyrimidine nucleotide biosynthesis pathway. This is Aspartate carbamoyltransferase catalytic subunit from Pectobacterium atrosepticum (strain SCRI 1043 / ATCC BAA-672) (Erwinia carotovora subsp. atroseptica).